Consider the following 259-residue polypeptide: Anti-Pycsar protein Apyc1 (259 aa).

Residues 21 to 233 are beta-lactamase-like; it reads YNNSALVTFT…KQQNKIFLMH (213 aa). His-64, His-66, Asp-68, His-69, His-154, Asp-178, and His-233 together coordinate Zn(2+).

The protein belongs to the anti-Pycsar protein Apyc1 family. In terms of assembly, homodimer. Zn(2+) is required as a cofactor.

It catalyses the reaction 3',5'-cyclic CMP + H2O = CMP + H(+). The enzyme catalyses 3',5'-cyclic UMP + H2O = UMP + H(+). Its function is as follows. Counteracts the host Pycsar antiviral defense system. Phosphodiesterase that enables metal-dependent hydrolysis of host cyclic nucleotide Pycsar defense signals such as cCMP and cUMP. The protein is Anti-Pycsar protein Apyc1 of Bacillus phage vB_BveM-Goe7.